Consider the following 490-residue polypeptide: Cheilanthifoline synthase (490 aa).

The helical transmembrane segment at 2 to 22 (EESLWVVTATVVVVFAIAKLL) threads the bilayer. Cys-432 serves as a coordination point for heme.

The protein belongs to the cytochrome P450 family. The cofactor is heme. As to expression, expressed in roots. Detected in leaves and stems.

The protein localises to the endoplasmic reticulum membrane. The enzyme catalyses (S)-scoulerine + reduced [NADPH--hemoprotein reductase] + O2 = (S)-cheilanthifoline + oxidized [NADPH--hemoprotein reductase] + 2 H2O + H(+). The protein operates within alkaloid biosynthesis. Functionally, methylenedioxy bridge-forming cytochrome P450 involved in the biosynthesis of isoquinoline alkaloids. Converts (S)-scoulerine into (R,S)-cheilanthifoline. Catalyzes an oxidative reaction that does not incorporate oxygen into the product. This is Cheilanthifoline synthase (CYP719A5) from Eschscholzia californica (California poppy).